The sequence spans 330 residues: Peroxisomal membrane protein PEX13 (330 aa).

The segment covering 1–14 (MSAPPTNQPPPLPP) has biased composition (pro residues). Residues 1 to 20 (MSAPPTNQPPPLPPRSFDNQ) are disordered. A helical transmembrane segment spans residues 193–213 (ASVNWPAALFWVVAIGGPWLI). Residues 235 to 300 (APHYTAQALF…PINYVRIVGK (66 aa)) enclose the SH3 domain.

It belongs to the peroxin-13 family. As to quaternary structure, interacts with PEX14/prx-14; forming the PEX13-PEX14 docking complex.

It localises to the peroxisome membrane. In terms of biological role, component of the PEX13-PEX14 docking complex, a translocon channel that specifically mediates the import of peroxisomal cargo proteins bound to PEX5/prx-5 receptor. The PEX13-PEX14 docking complex forms a large import pore which can be opened to a diameter of about 9 nm. Mechanistically, PEX5/prx-5 receptor along with cargo proteins associates with the PEX14/prx-14 subunit of the PEX13-PEX14 docking complex in the cytosol, leading to the insertion of the receptor into the organelle membrane with the concomitant translocation of the cargo into the peroxisome matrix. The chain is Peroxisomal membrane protein PEX13 (prx-13) from Caenorhabditis elegans.